Here is a 289-residue protein sequence, read N- to C-terminus: Eukaryotic translation initiation factor 3 subunit F (289 aa).

An MPN domain is found at 7–137 (VKVHPVVLFQ…LRAYVCVPLG (131 aa)).

The protein belongs to the eIF-3 subunit F family. Component of the eukaryotic translation initiation factor 3 (eIF-3) complex.

The protein resides in the cytoplasm. In terms of biological role, component of the eukaryotic translation initiation factor 3 (eIF-3) complex, which is involved in protein synthesis of a specialized repertoire of mRNAs and, together with other initiation factors, stimulates binding of mRNA and methionyl-tRNAi to the 40S ribosome. The eIF-3 complex specifically targets and initiates translation of a subset of mRNAs involved in cell proliferation. This Bombyx mori (Silk moth) protein is Eukaryotic translation initiation factor 3 subunit F.